We begin with the raw amino-acid sequence, 407 residues long: Lysophospholipid transporter LplT (407 aa).

A run of 11 helical transmembrane segments spans residues 18-38, 53-73, 91-111, 139-159, 163-183, 229-249, 257-277, 286-306, 310-330, 343-365, and 375-395; these read AVIIAQFFSAFGDNALLFATL, FLQMGFVAAYIILAPFVGQIA, AGALLICVGGNPFLGYTLVGV, LMEASTIAAILTGSVAGGVLA, IYGALSICAVAYGIALGANML, WGAGVTLRFLLVLWVPHALGI, LLNAMVAVGIVVGAGAAAKLV, LPAGFLIGVVVVIFTLQHNLM, SLLILLGALGGFFIVPLNALL, AIAVQNLGENGAMLLMLGLYSLV, and IGIGFGVLFALAIALLWVWLI.

The protein belongs to the major facilitator superfamily. LplT (TC 2.A.1.42) family.

It is found in the cell inner membrane. Functionally, catalyzes the facilitated diffusion of 2-acyl-glycero-3-phosphoethanolamine (2-acyl-GPE) into the cell. This is Lysophospholipid transporter LplT from Pectobacterium carotovorum subsp. carotovorum (strain PC1).